We begin with the raw amino-acid sequence, 416 residues long: MKIYLVGGAVRDSLLNLPIKDKDFMVVGATPEQMQQLGYRQVGKDFPVFLHPKTQQEYALARTERKVGLGYGGFSCYASPDVTLEQDLLRRDLTINAIAQDEAGNLYDPYHGIADINARQLRHVSAAFAEDPLRVLRVARFAARFHDLGFEIAAETMALMQHMSQTEELTALTPERVWQEVDKSLGGPHPEVFFEVLRQCGALNILFPEIEALFGVPQPEKWHPEIDTGLHTMLVLAQASSLTEEKAVRFAALVHDLGKALSPKEHWPKHHGHGQKGLPVIKSLCERLRIPNEYRDLALLVSDQHQNVHQAFELRSETIIKLFDKADFWRKPERLEQLLLACIADMRGRTGFEHHAYPQGDYLSACFSAASSVDVKAIIAAGFQGAQIKQALNSKRIEVVEQVKLNWQQSQTKQTP.

Residues Gly-8 and Arg-11 each coordinate ATP. CTP-binding residues include Gly-8 and Arg-11. The Mg(2+) site is built by Asp-21 and Asp-23. ATP is bound by residues Arg-91, Arg-137, and Arg-140. CTP contacts are provided by Arg-91, Arg-137, and Arg-140. The HD domain maps to 228 to 329 (TGLHTMLVLA…IKLFDKADFW (102 aa)).

The protein belongs to the tRNA nucleotidyltransferase/poly(A) polymerase family. Bacterial CCA-adding enzyme type 1 subfamily. As to quaternary structure, monomer. Can also form homodimers and oligomers. It depends on Mg(2+) as a cofactor. Ni(2+) serves as cofactor.

The catalysed reaction is a tRNA precursor + 2 CTP + ATP = a tRNA with a 3' CCA end + 3 diphosphate. It carries out the reaction a tRNA with a 3' CCA end + 2 CTP + ATP = a tRNA with a 3' CCACCA end + 3 diphosphate. Its function is as follows. Catalyzes the addition and repair of the essential 3'-terminal CCA sequence in tRNAs without using a nucleic acid template. Adds these three nucleotides in the order of C, C, and A to the tRNA nucleotide-73, using CTP and ATP as substrates and producing inorganic pyrophosphate. tRNA 3'-terminal CCA addition is required both for tRNA processing and repair. Also involved in tRNA surveillance by mediating tandem CCA addition to generate a CCACCA at the 3' terminus of unstable tRNAs. While stable tRNAs receive only 3'-terminal CCA, unstable tRNAs are marked with CCACCA and rapidly degraded. The polypeptide is Multifunctional CCA protein (Shewanella sp. (strain ANA-3)).